A 231-amino-acid chain; its full sequence is ATP-dependent dethiobiotin synthetase BioD (231 aa).

12–17 (EVGKTV) serves as a coordination point for ATP. Thr16 serves as a coordination point for Mg(2+). The active site involves Lys37. Substrate is bound at residue Ser41. ATP contacts are provided by residues Asp51, 112-115 (EGAG), and 202-204 (PKL). Mg(2+) contacts are provided by Asp51 and Glu112.

The protein belongs to the dethiobiotin synthetase family. As to quaternary structure, homodimer. Requires Mg(2+) as cofactor.

The protein localises to the cytoplasm. The enzyme catalyses (7R,8S)-7,8-diammoniononanoate + CO2 + ATP = (4R,5S)-dethiobiotin + ADP + phosphate + 3 H(+). The protein operates within cofactor biosynthesis; biotin biosynthesis; biotin from 7,8-diaminononanoate: step 1/2. In terms of biological role, catalyzes a mechanistically unusual reaction, the ATP-dependent insertion of CO2 between the N7 and N8 nitrogen atoms of 7,8-diaminopelargonic acid (DAPA, also called 7,8-diammoniononanoate) to form a ureido ring. The chain is ATP-dependent dethiobiotin synthetase BioD from Bacillus subtilis subsp. natto.